We begin with the raw amino-acid sequence, 187 residues long: Mitochondrial import receptor subunit TOM20-4 (187 aa).

The residue at position 1 (Met1) is an N-acetylmethionine. The Cytoplasmic segment spans residues 1-160 (MDMQNENERL…QKKTSEFKYD (160 aa)). The stretch at 84-117 (LSFGFLSSDQTEASDNFEKASQFFQLAVEEQPES) is one TPR repeat. The helical transmembrane segment at 161–178 (VFGWVILASYVVAWISFA) threads the bilayer. The Mitochondrial intermembrane portion of the chain corresponds to 179–187 (NSQTPVSRQ). The AKR2A-binding sequence (ABS) required for mitochondrion outer membrane targeting signature appears at 179 to 187 (NSQTPVSRQ).

Belongs to the Tom20 family. As to quaternary structure, forms part of the preprotein translocase complex of the outer mitochondrial membrane (TOM complex) which consists of at least 6 different proteins (TOM5, TOM6, TOM7, TOM20, TOM22/TOM9 and TOM40). Interacts with a variety of mitochondrial precursor proteins. Interacts with AKR2A. Component of a mitochondrial large protein complex that contains, at least, MIC60, DGS1, TOM40, TOM20 proteins, and petC/RISP. Post-translationally, the N-terminus is blocked. As to expression, expressed in roots, flowers, young cotyledons and leaves.

Its subcellular location is the mitochondrion outer membrane. Central component of the receptor complex responsible for the recognition and translocation of cytosolically synthesized mitochondrial preproteins. Together with TOM22 functions as the transit peptide receptor at the surface of the mitochondrion outer membrane and facilitates the movement of preproteins into the translocation pore. This chain is Mitochondrial import receptor subunit TOM20-4, found in Arabidopsis thaliana (Mouse-ear cress).